Consider the following 171-residue polypeptide: Probable chemoreceptor glutamine deamidase CheD 1 (171 aa).

The segment covering 1 to 18 (MTRTTGAAPDRAAPAAGE) has biased composition (low complexity). The tract at residues 1–23 (MTRTTGAAPDRAAPAAGETPGGG) is disordered.

The protein belongs to the CheD family.

The enzyme catalyses L-glutaminyl-[protein] + H2O = L-glutamyl-[protein] + NH4(+). In terms of biological role, probably deamidates glutamine residues to glutamate on methyl-accepting chemotaxis receptors (MCPs), playing an important role in chemotaxis. This is Probable chemoreceptor glutamine deamidase CheD 1 from Anaeromyxobacter dehalogenans (strain 2CP-C).